A 310-amino-acid chain; its full sequence is Vomeronasal type-1 receptor 44 (310 aa).

Over 1–20 (MNKANLLHIDTNIKITLLAE) the chain is Extracellular. A helical membrane pass occupies residues 21–41 (VSVGISANSILFIAYLCMLLG). The Cytoplasmic segment spans residues 42–50 (ENRHKPIDL). Residues 51–71 (YIAFLSLTQLMLLITMGLIAV) form a helical membrane-spanning segment. Residues 72–93 (DMFMPWGRWDSTTCQSLIYLHR) lie on the Extracellular side of the membrane. A disulfide bond links C85 and C172. The chain crosses the membrane as a helical span at residues 94–114 (FLRGLTLCATCLLNVLWTITL). Residues 115–131 (SSRNSCLAKFKHKYPHH) are Cytoplasmic-facing. The chain crosses the membrane as a helical span at residues 132–152 (ISGAFLFLCVLYMSFSSHFLV). Over 153 to 190 (SMTVTPNLTSENFMYVTQSCSLLPMSYSRTSMFSTPVA) the chain is Extracellular. The N-linked (GlcNAc...) asparagine glycan is linked to N159. The chain crosses the membrane as a helical span at residues 191–211 (IRETFLISLMALSSGYMVALL). At 212-238 (WRHKKQAQHLRSTSLSSKASPEQRATR) the chain is on the cytoplasmic side. Residues 239 to 259 (TILLLMSFFVVFYILDTVIFH) form a helical membrane-spanning segment. At 260–268 (SRMKFKDGS) the chain is on the extracellular side. The helical transmembrane segment at 269–289 (ILYCFQIIVSHSYVTVSPFVF) threads the bilayer. Residues 290–310 (ICTEKHIIKFLRSMCGRIANI) are Cytoplasmic-facing.

It belongs to the G-protein coupled receptor 1 family.

The protein resides in the cell membrane. Functionally, putative pheromone receptor implicated in the regulation of social and reproductive behavior. The sequence is that of Vomeronasal type-1 receptor 44 (Vmn1r44) from Mus musculus (Mouse).